We begin with the raw amino-acid sequence, 239 residues long: Ribonuclease 3 (239 aa).

The 123-residue stretch at 11–133 (HAAIQKKLGY…MFAAVSFDAD (123 aa)) folds into the RNase III domain. Glutamate 46 contributes to the Mg(2+) binding site. The active site involves aspartate 50. Aspartate 119 and glutamate 122 together coordinate Mg(2+). Residue glutamate 122 is part of the active site. A DRBM domain is found at 160-230 (DGKTALQEAL…AKEALKWLEE (71 aa)).

It belongs to the ribonuclease III family. As to quaternary structure, homodimer. Mg(2+) is required as a cofactor.

The protein resides in the cytoplasm. It catalyses the reaction Endonucleolytic cleavage to 5'-phosphomonoester.. Functionally, digests double-stranded RNA. Involved in the processing of primary rRNA transcript to yield the immediate precursors to the large and small rRNAs (23S and 16S). Also processes some mRNAs, and tRNAs when they are encoded in the rRNA operon. In terms of biological role, CRISPR (clustered regularly interspaced short palindromic repeat) is an adaptive immune system that provides protection against mobile genetic elements (viruses, transposable elements and conjugative plasmids). CRISPR clusters contain spacers, sequences complementary to antecedent mobile elements, and target invading nucleic acids. CRISPR clusters are transcribed and processed into CRISPR RNA (crRNA). In this organism endogenous ribonuclease 3 and Cas9 are required for correct coprocessing of pre-crRNA and the trans-encoded small RNA (tracrRNA). Cas9, crRNA and tracrRNA are required for cleavage of invading DNA. Complements pre-crRNA and tracrRNA coprocessing defects in an rnc deletion in S.pyogenes strain 370. In Neisseria meningitidis serogroup A / serotype 4A (strain DSM 15465 / Z2491), this protein is Ribonuclease 3.